The sequence spans 347 residues: NADH-ubiquinone oxidoreductase chain 2 (347 aa).

11 helical membrane passes run 1–21, 25–45, 60–80, 96–116, 127–147, 149–169, 178–198, 202–222, 239–259, 274–294, and 326–346; these read MNPM…SIVM, HWFL…PVLM, FLTQ…NLMF, MLLT…FWVP, GLIL…QIYP, INTN…GWGG, IMAY…IYNP, LLNL…LIFA, IITI…PLTG, NSVI…FFYM, and MMPL…FILL.

Belongs to the complex I subunit 2 family. As to quaternary structure, core subunit of respiratory chain NADH dehydrogenase (Complex I) which is composed of 45 different subunits. Interacts with TMEM242.

The protein resides in the mitochondrion inner membrane. It carries out the reaction a ubiquinone + NADH + 5 H(+)(in) = a ubiquinol + NAD(+) + 4 H(+)(out). In terms of biological role, core subunit of the mitochondrial membrane respiratory chain NADH dehydrogenase (Complex I) that is believed to belong to the minimal assembly required for catalysis. Complex I functions in the transfer of electrons from NADH to the respiratory chain. The immediate electron acceptor for the enzyme is believed to be ubiquinone. The sequence is that of NADH-ubiquinone oxidoreductase chain 2 from Suncus etruscus (Etruscan shrew).